The sequence spans 340 residues: CaiB/baiF CoA-transferase family protein ZK892.4 (340 aa).

Asp-154 (nucleophile) is an active-site residue.

It belongs to the CoA-transferase III family.

This chain is CaiB/baiF CoA-transferase family protein ZK892.4, found in Caenorhabditis elegans.